Consider the following 1901-residue polypeptide: A-kinase anchor protein 11 (1901 aa).

Phosphoserine occurs at positions 18, 422, 433, 444, and 448. Residues 407–443 (ALPANVRKPTPRKPESPYGNLCDAPDSPRPVKASRED) are disordered. Disordered regions lie at residues 843–864 (NPGN…SSSK) and 971–993 (LPVS…DSQN). Threonine 981 and threonine 1100 each carry phosphothreonine. Residues 1131-1153 (EFAPATPPSTPHNSSVGSLSENE) form a disordered region. The segment covering 1141 to 1153 (PHNSSVGSLSENE) has biased composition (polar residues). Phosphoserine occurs at positions 1171, 1176, 1177, 1242, and 1337. Residue threonine 1485 is modified to Phosphothreonine. Serine 1580 is subject to Phosphoserine. Residues 1650 to 1663 (LAEKIVAEAIEKAE) are PKA-RII subunit binding domain. The tract at residues 1708–1805 (KEIEDFQSTE…HEDEVEGLGQ (98 aa)) is disordered. Over residues 1713-1740 (FQSTESVSSQQMNLSIGDDSTGSWSNLS) the composition is skewed to polar residues. The segment covering 1747–1756 (DESSSFHHLS) has biased composition (basic and acidic residues). The span at 1757-1772 (ESNGNSSSWSSLGLEG) shows a compositional bias: low complexity. Over residues 1787-1801 (DGPDDKDEEHEDEVE) the composition is skewed to acidic residues.

This sequence belongs to the AKAP110 family. In terms of tissue distribution, expressed in heart, brain, lung, liver, kidney, testis and ovary. Weakly expressed in skeletal muscle, pancreas and spleen.

It localises to the cytoplasm. Its subcellular location is the cytoskeleton. The protein localises to the microtubule organizing center. The protein resides in the centrosome. Its function is as follows. Binds to type II regulatory subunits of protein kinase A and anchors/targets them. This chain is A-kinase anchor protein 11 (AKAP11), found in Homo sapiens (Human).